Reading from the N-terminus, the 128-residue chain is Azurin (128 aa).

A Plastocyanin-like domain is found at 1–128 (AECKVTVDST…AMMKGTVTLK (128 aa)). Cys3 and Cys26 form a disulfide bridge. Residues His46, Cys112, His117, and Met121 each contribute to the Cu cation site.

It localises to the periplasm. In terms of biological role, transfers electrons from cytochrome c551 to cytochrome oxidase. This is Azurin from Pseudomonas fluorescens biotype C.